The primary structure comprises 1163 residues: Protein phosphatase 1 regulatory subunit 26 (1163 aa).

The segment covering 65 to 83 (HERLTQRGQRAERSRDTRL) has biased composition (basic and acidic residues). Disordered regions lie at residues 65–91 (HERLTQRGQRAERSRDTRLAPKPAVCK), 144–253 (RGGA…TSAR), 266–393 (RKPP…KKKL), 463–496 (APMEGSDRPPSRNPLFCPQPMPPRSEGDSSNIDS), 514–653 (VGSP…DEDL), 672–929 (RDPR…TATA), and 1073–1163 (TQPG…GLKL). 2 stretches are compositionally biased toward polar residues: residues 163–179 (HSSTLPIPCPSQLTPGS) and 189–201 (DQGSTSPASMSSE). Residues 208–236 (IRAEIEQFLNEKRQHENPKCDGFVDKKSD) show a composition bias toward basic and acidic residues. Polar residues predominate over residues 273 to 297 (KMSTQQRNFQPKPTTEPETPVSTKL). A compositionally biased stretch (basic residues) spans 315–324 (MPARRSKRIR). The segment covering 515-535 (GSPQPAQGPLSSPGPSGQPGI) has biased composition (low complexity). 2 stretches are compositionally biased toward basic and acidic residues: residues 566–581 (KIREGRESTQDADHIQ) and 634–645 (ATEKESSEDKSS). The segment covering 672-682 (RDPRASCKKVR) has biased composition (basic residues). The span at 766–780 (TGASGHPPSASSPTS) shows a compositional bias: low complexity. The segment covering 783 to 792 (SAVDSDDSIE) has biased composition (acidic residues). Composition is skewed to basic and acidic residues over residues 793-808 (LEIRRFLAEKAKESIR) and 850-859 (EGRRGPERAR). Residues 860–871 (TQATGLLSQSGK) show a composition bias toward polar residues. The span at 901–910 (SSAKASPPSR) shows a compositional bias: low complexity. The segment covering 1105-1131 (QQDRRNSASEDKVLDLRYRHRVDREPQ) has biased composition (basic and acidic residues). Position 1111 is a phosphoserine (Ser-1111). Polar residues-rich tracts occupy residues 1133-1146 (QETLGSDASEFSDT) and 1154-1163 (ATVSSKGLKL).

Interacts with UTP20 and PPP1CA.

Its subcellular location is the nucleus. The protein localises to the nucleolus. Its function is as follows. Inhibits phosphatase activity of protein phosphatase 1 (PP1) complexes. May positively regulate cell proliferation. The chain is Protein phosphatase 1 regulatory subunit 26 (Ppp1r26) from Mus musculus (Mouse).